We begin with the raw amino-acid sequence, 23 residues long: Potassium channel toxin kappa-KTx 2.3 (23 aa).

2 disulfides stabilise this stretch: Cys-4–Cys-22 and Cys-8–Cys-18.

This sequence belongs to the short scorpion toxin superfamily. Potassium channel inhibitor kappa-KTx family. Kappa-KTx 2 subfamily. Expressed by the venom gland.

It localises to the secreted. Decreases the amplitude of the potassium current of the rat channels Kv1.1/KCNA1 by 33% and Kv1.2/KCNA2 by 8% as well as human Kv1.3/KCNA3 by 70%. The chain is Potassium channel toxin kappa-KTx 2.3 from Opisthacanthus madagascariensis (Scorpion).